The primary structure comprises 346 residues: Endo-1,4-beta-xylanase B (346 aa).

Positions 1-19 (MKGLPALLLLLIGCVSSFG) are cleaved as a signal peptide. The GH10 domain occupies 41-338 (GNNFWSLPDA…KPCYFAIREL (298 aa)). The active-site Proton donor is the glutamate 153. Catalysis depends on glutamate 259, which acts as the Nucleophile.

This sequence belongs to the glycosyl hydrolase 10 (cellulase F) family.

It catalyses the reaction Endohydrolysis of (1-&gt;4)-beta-D-xylosidic linkages in xylans.. This is Endo-1,4-beta-xylanase B (xynB) from Thermotoga neapolitana.